The primary structure comprises 202 residues: ATP-dependent Clp protease proteolytic subunit (202 aa).

Ser98 functions as the Nucleophile in the catalytic mechanism. His123 is a catalytic residue.

The protein belongs to the peptidase S14 family. As to quaternary structure, fourteen ClpP subunits assemble into 2 heptameric rings which stack back to back to give a disk-like structure with a central cavity, resembling the structure of eukaryotic proteasomes.

The protein resides in the cytoplasm. It carries out the reaction Hydrolysis of proteins to small peptides in the presence of ATP and magnesium. alpha-casein is the usual test substrate. In the absence of ATP, only oligopeptides shorter than five residues are hydrolyzed (such as succinyl-Leu-Tyr-|-NHMec, and Leu-Tyr-Leu-|-Tyr-Trp, in which cleavage of the -Tyr-|-Leu- and -Tyr-|-Trp bonds also occurs).. Functionally, cleaves peptides in various proteins in a process that requires ATP hydrolysis. Has a chymotrypsin-like activity. Plays a major role in the degradation of misfolded proteins. This is ATP-dependent Clp protease proteolytic subunit from Magnetococcus marinus (strain ATCC BAA-1437 / JCM 17883 / MC-1).